A 462-amino-acid chain; its full sequence is Cytochrome P450 20A1 (462 aa).

A helical membrane pass occupies residues 4–24 (FAIFAVTFLLALVGAVLYLYP). A heme-binding site is contributed by cysteine 409.

Belongs to the cytochrome P450 family. It depends on heme as a cofactor.

The protein localises to the membrane. In Bos taurus (Bovine), this protein is Cytochrome P450 20A1 (CYP20A1).